The chain runs to 250 residues: MVNIHVVIPARLKSTRLPGKMLADIAGKPMIQRVYEQVAKSKFKSIIIATDSQEIKEVAENFGAKVILTRDDHESGTDRIAEAVTKLGFADEDIVVNVQGDEPLIPVENIEQAAQLLIEKPEAVVSTLCERITEAEDIYNPNNVKVVFDKNNYALYFSRASIPFERGFSENHQVSISEFFRHIGIYTYRVGFLKHYAELAISPIEKYEALEQLRVLYNGYKIAIEQSAKPTPAGVDTLQDLEKVRKLFDV.

This sequence belongs to the KdsB family.

Its subcellular location is the cytoplasm. It carries out the reaction 3-deoxy-alpha-D-manno-oct-2-ulosonate + CTP = CMP-3-deoxy-beta-D-manno-octulosonate + diphosphate. Its pathway is nucleotide-sugar biosynthesis; CMP-3-deoxy-D-manno-octulosonate biosynthesis; CMP-3-deoxy-D-manno-octulosonate from 3-deoxy-D-manno-octulosonate and CTP: step 1/1. The protein operates within bacterial outer membrane biogenesis; lipopolysaccharide biosynthesis. Its function is as follows. Activates KDO (a required 8-carbon sugar) for incorporation into bacterial lipopolysaccharide in Gram-negative bacteria. The sequence is that of 3-deoxy-manno-octulosonate cytidylyltransferase from Francisella philomiragia subsp. philomiragia (strain ATCC 25017 / CCUG 19701 / FSC 153 / O#319-036).